A 414-amino-acid polypeptide reads, in one-letter code: Isocitrate dehydrogenase [NADP] cytoplasmic (414 aa).

Ser2 bears the N-acetylserine mark. Phosphotyrosine is present on Tyr42. Thr75–Thr77 serves as a coordination point for NADP(+). Thr77 serves as a coordination point for substrate. Lys81 bears the N6-acetyllysine mark. Arg82 provides a ligand contact to NADP(+). Substrate is bound by residues Ser94 to Arg100 and Arg109. At Lys126 the chain carries N6-succinyllysine. Substrate is bound by residues Arg132 and Lys212. N6-acetyllysine is present on residues Lys224, Lys233, and Lys243. A Mn(2+)-binding site is contributed by Asp252. Residue Lys260 participates in NADP(+) binding. Mn(2+) is bound by residues Asp275 and Asp279. An NADP(+)-binding site is contributed by Gly310–His315. Lys321 carries the post-translational modification N6-acetyllysine. An NADP(+)-binding site is contributed by Asn328. The residue at position 389 (Ser389) is a Phosphoserine. Lys400 bears the N6-succinyllysine mark.

The protein belongs to the isocitrate and isopropylmalate dehydrogenases family. As to quaternary structure, homodimer. The cofactor is Mg(2+). Mn(2+) is required as a cofactor. Post-translationally, acetylation at Lys-374 dramatically reduces catalytic activity.

The protein resides in the cytoplasm. It is found in the cytosol. The enzyme catalyses D-threo-isocitrate + NADP(+) = 2-oxoglutarate + CO2 + NADPH. Its function is as follows. Catalyzes the NADP(+)-dependent oxidative decarboxylation of isocitrate (D-threo-isocitrate) to 2-ketoglutarate (2-oxoglutarate), which is required by other enzymes such as the phytanoyl-CoA dioxygenase. Plays a critical role in the generation of NADPH, an important cofactor in many biosynthesis pathways. May act as a corneal epithelial crystallin and may be involved in maintaining corneal epithelial transparency. The protein is Isocitrate dehydrogenase [NADP] cytoplasmic (IDH1) of Pongo abelii (Sumatran orangutan).